A 205-amino-acid polypeptide reads, in one-letter code: Dephospho-CoA kinase (205 aa).

A DPCK domain is found at 5 to 201 (VVGLTGGIGS…QRYLQLSGNH (197 aa)). 13–18 (GSGKTT) contacts ATP.

It belongs to the CoaE family.

Its subcellular location is the cytoplasm. The enzyme catalyses 3'-dephospho-CoA + ATP = ADP + CoA + H(+). Its pathway is cofactor biosynthesis; coenzyme A biosynthesis; CoA from (R)-pantothenate: step 5/5. Functionally, catalyzes the phosphorylation of the 3'-hydroxyl group of dephosphocoenzyme A to form coenzyme A. The sequence is that of Dephospho-CoA kinase from Shewanella oneidensis (strain ATCC 700550 / JCM 31522 / CIP 106686 / LMG 19005 / NCIMB 14063 / MR-1).